We begin with the raw amino-acid sequence, 512 residues long: Polyamine aminopropyltransferase (512 aa).

The next 7 membrane-spanning stretches (helical) occupy residues 19–39 (IVSI…SYIL), 48–68 (LTIS…EKFM), 76–96 (VWIE…MFGI), 108–128 (YLYS…PILI), 151–171 (AGGL…FGMV), 172–192 (KTAF…LWLF), and 199–219 (FIVH…GLFF). In terms of domain architecture, PABS spans 215–450 (AGLFFGEEMA…GNWGFVMASR (236 aa)). A spermidine synthase region spans residues 217–457 (LFFGEEMAFN…ASREEIDLDI (241 aa)). Q245 is an S-methyl-5'-thioadenosine binding site. H275 and D299 together coordinate spermidine. S-methyl-5'-thioadenosine-binding positions include D319 and 353-354 (DA). Residue D371 is the Proton acceptor of the active site.

This sequence belongs to the spermidine/spermine synthase family. As to quaternary structure, homodimer or homotetramer.

The protein resides in the cell membrane. The catalysed reaction is S-adenosyl 3-(methylsulfanyl)propylamine + putrescine = S-methyl-5'-thioadenosine + spermidine + H(+). It functions in the pathway amine and polyamine biosynthesis; spermidine biosynthesis; spermidine from putrescine: step 1/1. Functionally, catalyzes the irreversible transfer of a propylamine group from the amino donor S-adenosylmethioninamine (decarboxy-AdoMet) to putrescine (1,4-diaminobutane) to yield spermidine. This is Polyamine aminopropyltransferase from Oceanobacillus iheyensis (strain DSM 14371 / CIP 107618 / JCM 11309 / KCTC 3954 / HTE831).